Here is a 135-residue protein sequence, read N- to C-terminus: uncharacterized protein (135 aa).

Positions 100-125 are disordered; that stretch reads KESPATSSEDISSCSDCDSERLQSDD. The segment covering 106 to 115 has biased composition (low complexity); that stretch reads SSEDISSCSD.

This is an uncharacterized protein from Microplitis demolitor (Parasitoid wasp).